Reading from the N-terminus, the 71-residue chain is Alpha-cobratoxin (71 aa).

5 disulfide bridges follow: Cys-3-Cys-20, Cys-14-Cys-41, Cys-26-Cys-30, Cys-45-Cys-56, and Cys-57-Cys-62.

This sequence belongs to the three-finger toxin family. Long-chain subfamily. Type II alpha-neurotoxin sub-subfamily. In terms of assembly, monomer, homo- or heterodimer with cytotoxins 1 (P60305), 2 (AC P01445), and 3 (AC P01446); disulfide-linked. In terms of processing, in homodimer alpha-cobratoxin, selective reduction of Cys(26)-Cys(30) in one subunit does not affect the activity against the alpha-7/CHRNA7 nAChR, whereas its reduction in both subunits almost prevents alpha-7/CHRNA7 nAChR recognition. On the contrary, reduction of one or both Cys(26)-Cys(30) disulfide bonds in the homodimer considerably potentiates inhibition of the alpha-3-beta-2/CHRNA3-CHRNB2 nAChR by the toxin. As to expression, expressed by the venom gland.

It localises to the secreted. Monomer: binds with high affinity to muscular (alpha-1-beta-1-gamma-delta/CHRNA1-CHRNB1-CHRNG-CHRND) nAChR (tested on Torpedo californica, Kd=0.2-4.5 nM) and neuronal alpha-7/CHRNA7 nicotinic acetylcholine receptors (Kd=13-105 nM). Also inhibits GABA(A) channels. Heteropentamer targets studied are composed of alpha-1-beta-3-gamma-2 (GABRA1-GABRB3-GABRG2) subunits (IC(50)=236 nM), alpha-1-beta-2-gamma-2 (GABRA1-GABRB2-GABRG2) subunits (IC(50)=469 nM), alpha-2-beta-2-gamma-2 (GABRA2-GABRB2-GABRG2) subunits (IC(50)=485 nM), alpha-5-beta-3-gamma-2 (GABRA5-GABRB3-GABRG2) subunits (IC(50)=635 nM), and alpha-2-beta-3-gamma-2 (GABRA2-GABRB3-GABRG2) subunits (IC(50)=1099 nM) (activated by 10 uM GABA). In terms of biological role, homodimer: binds with high affinity (but lower than the monomeric form) to muscular (IC(50)=9.7 nM) and with low affinity to neuronal alpha-7/CHRNA7 nAChRs (IC(50)=1370 nM). However, it acquires (compared to the monomeric form) the capacity to block alpha-3/beta-2 (CHRNA3/CHRNB2) nAChRs. Functionally, heterodimer with cytotoxin 3 (AC P01446): is slightly more active than the homodimer in inhibiting alpha-7/CHRNA7 nAChR and is considerably more active in blocking the alpha-3-beta-2/CHRNA3-CHRNB2 nAChR. The protein is Alpha-cobratoxin of Naja kaouthia (Monocled cobra).